The following is a 337-amino-acid chain: Eukaryotic translation initiation factor 3 subunit H (337 aa).

The 133-residue stretch at 21-153 (VQCDGLAVMK…LKAYRLTPQA (133 aa)) folds into the MPN domain.

The protein belongs to the eIF-3 subunit H family. In terms of assembly, component of the eukaryotic translation initiation factor 3 (eIF-3) complex. The eIF-3 complex interacts with pix. Interacts with mxt.

The protein localises to the cytoplasm. Component of the eukaryotic translation initiation factor 3 (eIF-3) complex, which is involved in protein synthesis of a specialized repertoire of mRNAs and, together with other initiation factors, stimulates binding of mRNA and methionyl-tRNAi to the 40S ribosome. The eIF-3 complex specifically targets and initiates translation of a subset of mRNAs involved in cell proliferation. The protein is Eukaryotic translation initiation factor 3 subunit H of Drosophila grimshawi (Hawaiian fruit fly).